Reading from the N-terminus, the 264-residue chain is Thymidylate synthase (264 aa).

Arg21 lines the dUMP pocket. His51 is a binding site for (6R)-5,10-methylene-5,6,7,8-tetrahydrofolate. 126 to 127 (RR) is a binding site for dUMP. Cys146 (nucleophile) is an active-site residue. DUMP contacts are provided by residues 166–169 (RSCD), Asn177, and 207–209 (HLY). A (6R)-5,10-methylene-5,6,7,8-tetrahydrofolate-binding site is contributed by Asp169. Ala263 is a (6R)-5,10-methylene-5,6,7,8-tetrahydrofolate binding site.

Belongs to the thymidylate synthase family. Bacterial-type ThyA subfamily. In terms of assembly, homodimer.

It localises to the cytoplasm. The enzyme catalyses dUMP + (6R)-5,10-methylene-5,6,7,8-tetrahydrofolate = 7,8-dihydrofolate + dTMP. Its pathway is pyrimidine metabolism; dTTP biosynthesis. Its function is as follows. Catalyzes the reductive methylation of 2'-deoxyuridine-5'-monophosphate (dUMP) to 2'-deoxythymidine-5'-monophosphate (dTMP) while utilizing 5,10-methylenetetrahydrofolate (mTHF) as the methyl donor and reductant in the reaction, yielding dihydrofolate (DHF) as a by-product. This enzymatic reaction provides an intracellular de novo source of dTMP, an essential precursor for DNA biosynthesis. This Edwardsiella ictaluri (strain 93-146) protein is Thymidylate synthase.